The primary structure comprises 127 residues: Modulator protein MzrA (127 aa).

Residues 1 to 10 (MGLQNMTLRR) lie on the Cytoplasmic side of the membrane. The chain crosses the membrane as a helical span at residues 11–31 (FTLSMSALLLLCALLWLWAAL). The Periplasmic segment spans residues 32–127 (EQQESSLAIR…RLRDAPHRLG (96 aa)).

This sequence belongs to the MzrA family. As to quaternary structure, interacts with EnvZ.

The protein resides in the cell inner membrane. Functionally, modulates the activity of the EnvZ/OmpR two-component regulatory system, probably by directly modulating EnvZ enzymatic activity and increasing stability of phosphorylated OmpR. The polypeptide is Modulator protein MzrA (Enterobacter lignolyticus (strain SCF1)).